Here is a 495-residue protein sequence, read N- to C-terminus: Glucose-6-phosphate 1-dehydrogenase (495 aa).

Residues 11–18 (GASGDLAK), Arg45, 84–85 (DV), and Lys147 each bind NADP(+). His177, Lys181, Glu215, and Asp234 together coordinate substrate. His239 (proton acceptor) is an active-site residue. 2 residues coordinate substrate: Lys339 and Lys344.

The protein belongs to the glucose-6-phosphate dehydrogenase family.

The catalysed reaction is D-glucose 6-phosphate + NADP(+) = 6-phospho-D-glucono-1,5-lactone + NADPH + H(+). Its pathway is carbohydrate degradation; pentose phosphate pathway; D-ribulose 5-phosphate from D-glucose 6-phosphate (oxidative stage): step 1/3. Its function is as follows. Catalyzes the oxidation of glucose 6-phosphate to 6-phosphogluconolactone. The sequence is that of Glucose-6-phosphate 1-dehydrogenase from Streptococcus pneumoniae serotype 4 (strain ATCC BAA-334 / TIGR4).